We begin with the raw amino-acid sequence, 470 residues long: 3-isopropylmalate dehydratase large subunit (470 aa).

The [4Fe-4S] cluster site is built by Cys-348, Cys-409, and Cys-412.

This sequence belongs to the aconitase/IPM isomerase family. LeuC type 1 subfamily. In terms of assembly, heterodimer of LeuC and LeuD. The cofactor is [4Fe-4S] cluster.

The catalysed reaction is (2R,3S)-3-isopropylmalate = (2S)-2-isopropylmalate. It participates in amino-acid biosynthesis; L-leucine biosynthesis; L-leucine from 3-methyl-2-oxobutanoate: step 2/4. In terms of biological role, catalyzes the isomerization between 2-isopropylmalate and 3-isopropylmalate, via the formation of 2-isopropylmaleate. The chain is 3-isopropylmalate dehydratase large subunit from Acidithiobacillus ferrooxidans (strain ATCC 23270 / DSM 14882 / CIP 104768 / NCIMB 8455) (Ferrobacillus ferrooxidans (strain ATCC 23270)).